A 129-amino-acid chain; its full sequence is Cytochrome c oxidase subunit 13, mitochondrial (129 aa).

A mitochondrion-targeting transit peptide spans 1–9 (MFRQCAKRY). Topologically, residues 10–43 (ASSLPPNALKPAFGPPDKVAAQKFKESLMATEKH) are mitochondrial matrix. The helical transmembrane segment at 44–71 (AKDTSNMWVKISVWVALPAIALTAVNTY) threads the bilayer. Over 72-129 (FVEKEHAEHREHLKHVPDSEWPRDYEFMNIRSKPFFWGDGDKTLFWNPVVNRHIEHDD) the chain is Mitochondrial intermembrane.

Belongs to the cytochrome c oxidase subunit 6A family. As to quaternary structure, component of the cytochrome c oxidase (complex IV, CIV), a multisubunit enzyme composed of 12 subunits. The complex is composed of a catalytic core of 3 subunits COX1, COX2 and COX3, encoded in the mitochondrial DNA, and 9 supernumerary subunits COX4, COX5A (or COX5B), COX6, COX7, COX8, COX9, COX12, COX13 and COX26, which are encoded in the nuclear genome. The complex exists as a monomer or a dimer and forms supercomplexes (SCs) in the inner mitochondrial membrane with a dimer of ubiquinol-cytochrome c oxidoreductase (cytochrome b-c1 complex, complex III, CIII), resulting in 2 different assemblies (supercomplexes III(2)IV and III(2)IV(2)). COX13 interacts with COX1 and COX3 on the intermembrane space (IMS) and COX4 on the matrix side.

The protein resides in the mitochondrion inner membrane. It participates in energy metabolism; oxidative phosphorylation. Functionally, component of the cytochrome c oxidase, the last enzyme in the mitochondrial electron transport chain which drives oxidative phosphorylation. The respiratory chain contains 3 multisubunit complexes succinate dehydrogenase (complex II, CII), ubiquinol-cytochrome c oxidoreductase (cytochrome b-c1 complex, complex III, CIII) and cytochrome c oxidase (complex IV, CIV), that cooperate to transfer electrons derived from NADH and succinate to molecular oxygen, creating an electrochemical gradient over the inner membrane that drives transmembrane transport and the ATP synthase. Cytochrome c oxidase is the component of the respiratory chain that catalyzes the reduction of oxygen to water. Electrons originating from reduced cytochrome c in the intermembrane space (IMS) are transferred via the dinuclear copper A center (CU(A)) of COX2 and heme A of COX1 to the active site in COX1, a binuclear center (BNC) formed by heme A3 and copper B (CU(B)). The BNC reduces molecular oxygen to 2 water molecules using 4 electrons from cytochrome c in the IMS and 4 protons from the mitochondrial matrix. This Saccharomyces cerevisiae (strain ATCC 204508 / S288c) (Baker's yeast) protein is Cytochrome c oxidase subunit 13, mitochondrial (COX13).